Here is a 774-residue protein sequence, read N- to C-terminus: MTAEFDEEVVFENSPLFQYLQDLGHTDFEICPLSKEEERLAENGQGKQDVHTTEKKSIISRTVEFLKSWSPFLSKKKKDEKIHLLEIGFRLESLRTILQQEVLIQEDVELIELLDPGILSAGQTQNQQNDHLPTLWSIATPNIWETSILFVFLSAVAAFQSWSISSSLIWGPSLILFAAFTVLKTLHTWRSARLRIILRKYCTQVEGTVSNSRAFTNLVRKALRLIQETEVISRGFTLVSAACPYGKAGQHASQHLLGLRKAVYRTVRTNFRISRLATLYMLKHYPLNSEIDNVTNYICVVPLKDLGLGLCEEHVSEEDAHNLTDAFSLPALKVLFQLWIGQSSEFFRRLALLLSPENASQGPSTSPEQLPHFIWSDVVQDLPHTQAACMAELKRSYEFYRYFETQHQSGLERTAKRKEVGELNNLHGAVRSLQLHLKALLNEVIVLEDELDKLSSCKEMQAVTPEASLMLEEKLRIIQPHVQASNTCWEEALCQVERMVRKPTTKKDTGKYSCENLNYPVVSNVPPAMRIEDRDPVPEEQILEAYVEEAVTDQEFNSEEIYLFSPEERERQKREREESRRVLQELKAVLGLKASEAERQKWKQLLFSEHAVITPLLPEEPVGHFEPLLSIYPEEPHKNLGFYGEIPSEINGTEHVKDAPIQVDHGNMNHEDEAKICPVSEEVEPASCKEEEDETPCPAPRTVLPPAIKERLARIHQSSDLNFTSGLATQVAARSLTFTFLQEQTFGDEWDDDDDNEDHDHDKERNNDSSQLEG.

2 consecutive transmembrane segments (helical) span residues 138-158 (IATP…AVAA) and 163-183 (SISS…FTVL). Positions 430–457 (VRSLQLHLKALLNEVIVLEDELDKLSSC) form a coiled coil. Acidic residues predominate over residues 746-757 (FGDEWDDDDDNE). Residues 746–774 (FGDEWDDDDDNEDHDHDKERNNDSSQLEG) are disordered. A compositionally biased stretch (basic and acidic residues) spans 758-767 (DHDHDKERNN).

It belongs to the vezatin family. Interacts with myosin VIIa and the cadherin-catenins complex.

Its subcellular location is the cell membrane. The protein localises to the cell junction. It is found in the adherens junction. It localises to the nucleus. In terms of biological role, plays a pivotal role in the establishment of adherens junctions and their maintenance in adult life. The polypeptide is Vezatin (vezt) (Xenopus laevis (African clawed frog)).